The following is a 413-amino-acid chain: uncharacterized protein (413 aa).

It belongs to the mimivirus L17x/L18x family.

This is an uncharacterized protein from Acanthamoeba polyphaga (Amoeba).